We begin with the raw amino-acid sequence, 78 residues long: Large ribosomal subunit protein bL28 (78 aa).

It belongs to the bacterial ribosomal protein bL28 family.

This chain is Large ribosomal subunit protein bL28, found in Thiobacillus denitrificans (strain ATCC 25259 / T1).